The primary structure comprises 560 residues: MTTSWSDRLQNAADMPANMDKHALKKYRREAYHRVFVNRSLAMEKIKCFGFDMDYTLAVYKSPEYESLGFELTVERLVSIGYPQELLSFAYDSTFPTRGLVFDTLYGNLLKVDAYGNLLVCAHGFNFIRGPETREQYPNKFIQRDDTERFYILNTLFNLPETYLLACLVDFFTNCPRYTSCETGFKDGDLFMSYRSMFQDVRDAVDWVHYKGSLKEKTVENLEKYVVKDGKLPLLLSRMKEVGKVFLATNSDYKYTDKIMTYLFDFPHGPKPGSSHRPWQSYFDLILVDARKPLFFGEGTVLRQVDTKTGKLKIGTYTGPLQHGIVYSGGSSDTVCDLLGAKGKDILYIGDHIFGDILKSKKRQGWRTFLVIPELAQELHVWTDKSSLFEELQSLDIFLAELYKHLDSSSNERPDISSIQRRIKKVTHDMDMCYGMMGSLFRSGSRQTLFASQVMRYADLYAASFINLLYYPFSYLFRAAHVLMPHESTVEHTHVDINEMESPLATRNRTSVDFKDTDYKRHQLTRSISEIKPPNLFPLAPQEITHCHDEDDDEEEEEEE.

D52 (nucleophile) is an active-site residue. Residues D52 and D54 each coordinate IMP. D52 and D54 together coordinate Mg(2+). D54 serves as the catalytic Proton donor. The ATP site is built by R144 and N154. IMP is bound by residues R202, D206, K215, T249, N250, S251, and K292. A Mg(2+)-binding site is contributed by D351. S418 is subject to Phosphoserine. Residues Q453 and R456 each contribute to the ATP site. 3 positions are modified to phosphoserine: S502, S511, and S527. Residues 541-560 are disordered; the sequence is PQEITHCHDEDDDEEEEEEE. Positions 548–560 are required for tetramer assembly; the sequence is HDEDDDEEEEEEE. Positions 550–560 are enriched in acidic residues; sequence EDDDEEEEEEE.

It belongs to the 5'(3')-deoxyribonucleotidase family. As to quaternary structure, homotetramer. Requires Mg(2+) as cofactor.

The protein localises to the cytoplasm. It localises to the cytosol. It catalyses the reaction a ribonucleoside 5'-phosphate + H2O = a ribonucleoside + phosphate. The catalysed reaction is a 2'-deoxyribonucleoside + a ribonucleoside 5'-phosphate = a ribonucleoside + a 2'-deoxyribonucleoside 5'-phosphate. It carries out the reaction IMP + H2O = inosine + phosphate. The enzyme catalyses GMP + H2O = guanosine + phosphate. It catalyses the reaction dIMP + H2O = 2'-deoxyinosine + phosphate. The catalysed reaction is dGMP + H2O = 2'-deoxyguanosine + phosphate. It carries out the reaction XMP + H2O = xanthosine + phosphate. The enzyme catalyses inosine + GMP = guanosine + IMP. It catalyses the reaction dGMP + inosine = 2'-deoxyguanosine + IMP. The catalysed reaction is dIMP + inosine = 2'-deoxyinosine + IMP. It carries out the reaction inosine + UMP = uridine + IMP. The enzyme catalyses inosine + CMP = cytidine + IMP. It catalyses the reaction inosine + AMP = IMP + adenosine. Allosterically activated by various compounds including ATP, 2,3-BPG/2,3-Bisphosphoglyceric acid and Ap4A/P1,P4-bis(5'-adenosyl) tetraphosphate. Binding of an allosteric activator is a prerequisiste to magnesium and substrate binding. Inhibited by inorganic phosphate. Broad specificity cytosolic 5'-nucleotidase that catalyzes the dephosphorylation of 6-hydroxypurine nucleoside 5'-monophosphates. In addition, possesses a phosphotransferase activity by which it can transfer a phosphate from a donor nucleoside monophosphate to an acceptor nucleoside, preferably inosine, deoxyinosine and guanosine. Has the highest activities for IMP and GMP followed by dIMP, dGMP and XMP. Could also catalyze the transfer of phosphates from pyrimidine monophosphates but with lower efficiency. Through these activities regulates the purine nucleoside/nucleotide pools within the cell. This Bos taurus (Bovine) protein is Cytosolic purine 5'-nucleotidase.